Reading from the N-terminus, the 231-residue chain is Enolase-phosphatase E1 (231 aa).

Belongs to the HAD-like hydrolase superfamily. MasA/MtnC family. As to quaternary structure, monomer. Mg(2+) is required as a cofactor.

The enzyme catalyses 5-methylsulfanyl-2,3-dioxopentyl phosphate + H2O = 1,2-dihydroxy-5-(methylsulfanyl)pent-1-en-3-one + phosphate. The protein operates within amino-acid biosynthesis; L-methionine biosynthesis via salvage pathway; L-methionine from S-methyl-5-thio-alpha-D-ribose 1-phosphate: step 3/6. It participates in amino-acid biosynthesis; L-methionine biosynthesis via salvage pathway; L-methionine from S-methyl-5-thio-alpha-D-ribose 1-phosphate: step 4/6. Functionally, bifunctional enzyme that catalyzes the enolization of 2,3-diketo-5-methylthiopentyl-1-phosphate (DK-MTP-1-P) into the intermediate 2-hydroxy-3-keto-5-methylthiopentenyl-1-phosphate (HK-MTPenyl-1-P), which is then dephosphorylated to form the acireductone 1,2-dihydroxy-3-keto-5-methylthiopentene (DHK-MTPene). In Stenotrophomonas maltophilia (strain K279a), this protein is Enolase-phosphatase E1.